Here is a 784-residue protein sequence, read N- to C-terminus: ATP-dependent 6-phosphofructokinase, platelet type (784 aa).

Residue M1 is modified to N-acetylmethionine. The interval 1–399 (MDADDSRAPK…NLNTYKRLAI (399 aa)) is N-terminal catalytic PFK domain 1. Phosphoserine is present on residues S6, S12, and S21. Residues G34, 97–98 (RC), and 127–130 (GDGS) each bind ATP. D128 is a Mg(2+) binding site. S142 bears the Phosphoserine mark. Substrate contacts are provided by residues 173-175 (SID), R210, 217-219 (MGR), E273, R301, and 307-310 (HVQR). D175 functions as the Proton acceptor in the catalytic mechanism. S386 is subject to Phosphoserine. K395 carries the N6-acetyllysine modification. The tract at residues 400–411 (KLPDDQIPKTNC) is interdomain linker. The C-terminal regulatory PFK domain 2 stretch occupies residues 412–784 (NVAVINVGAP…QLEHVQPWSV (373 aa)). R481 contacts beta-D-fructose 2,6-bisphosphate. An N6-acetyllysine modification is found at K486. Beta-D-fructose 2,6-bisphosphate is bound by residues 538-542 (TVSNN), R576, 583-585 (MGG), and E639. S540 carries O-linked (GlcNAc) serine glycosylation. A Phosphotyrosine modification is found at Y651. Beta-D-fructose 2,6-bisphosphate contacts are provided by residues R665 and 671–674 (HMQQ). Position 688 is an N6-acetyllysine (K688). R744 provides a ligand contact to beta-D-fructose 2,6-bisphosphate. S783 carries the post-translational modification Phosphoserine.

Belongs to the phosphofructokinase type A (PFKA) family. ATP-dependent PFK group I subfamily. Eukaryotic two domain clade 'E' sub-subfamily. Homo- and heterotetramers. Phosphofructokinase (PFK) enzyme functions as a tetramer composed of different combinations of 3 types of subunits, called PFKM (M), PFKL (L) and PFKP (P). The composition of the PFK tetramer differs according to the tissue type it is present in. The kinetic and regulatory properties of the tetrameric enzyme are dependent on the subunit composition, hence can vary across tissues. Interacts with ATG4B; promoting phosphorylation of ATG4B. The cofactor is Mg(2+). GlcNAcylation decreases enzyme activity. In terms of processing, phosphorylation at Ser-386 promotes interaction with ATG4B.

The protein resides in the cytoplasm. It catalyses the reaction beta-D-fructose 6-phosphate + ATP = beta-D-fructose 1,6-bisphosphate + ADP + H(+). It functions in the pathway carbohydrate degradation; glycolysis; D-glyceraldehyde 3-phosphate and glycerone phosphate from D-glucose: step 3/4. With respect to regulation, allosterically activated by ADP, AMP, or fructose 2,6-bisphosphate, and allosterically inhibited by ATP or citrate. Catalyzes the phosphorylation of D-fructose 6-phosphate to fructose 1,6-bisphosphate by ATP, the first committing step of glycolysis. This Pongo abelii (Sumatran orangutan) protein is ATP-dependent 6-phosphofructokinase, platelet type (PFKP).